Here is an 89-residue protein sequence, read N- to C-terminus: uncharacterized protein (89 aa).

This is an uncharacterized protein from Saccharomyces cerevisiae (strain ATCC 204508 / S288c) (Baker's yeast).